Consider the following 341-residue polypeptide: Ketol-acid reductoisomerase (NADP(+)) (341 aa).

The KARI N-terminal Rossmann domain maps to 2 to 181 (AKVYYNGDAN…GAARAGVLET (180 aa)). NADP(+) is bound by residues 25–28 (YGSQ), Arg-48, Ser-52, and 82–85 (DEKQ). The active site involves His-107. Gly-133 is a binding site for NADP(+). The 146-residue stretch at 182 to 327 (TFKEETETDL…RELRSMMPFV (146 aa)) folds into the KARI C-terminal knotted domain. 4 residues coordinate Mg(2+): Asp-190, Glu-194, Glu-226, and Glu-230. Ser-251 serves as a coordination point for substrate.

This sequence belongs to the ketol-acid reductoisomerase family. Mg(2+) is required as a cofactor.

The catalysed reaction is (2R)-2,3-dihydroxy-3-methylbutanoate + NADP(+) = (2S)-2-acetolactate + NADPH + H(+). It catalyses the reaction (2R,3R)-2,3-dihydroxy-3-methylpentanoate + NADP(+) = (S)-2-ethyl-2-hydroxy-3-oxobutanoate + NADPH + H(+). The protein operates within amino-acid biosynthesis; L-isoleucine biosynthesis; L-isoleucine from 2-oxobutanoate: step 2/4. It participates in amino-acid biosynthesis; L-valine biosynthesis; L-valine from pyruvate: step 2/4. In terms of biological role, involved in the biosynthesis of branched-chain amino acids (BCAA). Catalyzes an alkyl-migration followed by a ketol-acid reduction of (S)-2-acetolactate (S2AL) to yield (R)-2,3-dihydroxy-isovalerate. In the isomerase reaction, S2AL is rearranged via a Mg-dependent methyl migration to produce 3-hydroxy-3-methyl-2-ketobutyrate (HMKB). In the reductase reaction, this 2-ketoacid undergoes a metal-dependent reduction by NADPH to yield (R)-2,3-dihydroxy-isovalerate. The chain is Ketol-acid reductoisomerase (NADP(+)) from Geobacillus kaustophilus (strain HTA426).